The following is a 55-amino-acid chain: ADANKVWPTGLTVAEAEELHTYVTNGFRVFVGIAVVAHVLVFAAHPWGRGGALVA.

At 1–21 the chain is on the cytoplasmic side; that stretch reads ADANKVWPTGLTVAEAEELHT. Residues 22-44 form a helical membrane-spanning segment; sequence YVTNGFRVFVGIAVVAHVLVFAA. Residue histidine 38 participates in a bacteriochlorophyll binding. The Periplasmic portion of the chain corresponds to 45–55; the sequence is HPWGRGGALVA.

The protein belongs to the antenna complex beta subunit family. The core complex is formed by different alpha and beta chains, binding bacteriochlorophyll molecules, and arranged most probably in tetrameric structures disposed around the reaction center. The non-pigmented gamma chains may constitute additional components.

It is found in the cell inner membrane. Its function is as follows. Antenna complexes are light-harvesting systems, which transfer the excitation energy to the reaction centers. In Rhodocyclus tenuis (Rhodospirillum tenue), this protein is Light-harvesting polypeptide B-800/860 beta chain.